We begin with the raw amino-acid sequence, 92 residues long: Large ribosomal subunit protein bL36m (92 aa).

Residues 1–54 (MASLGRKFFAVGVLSRVFPSAFNAQKGLLKNASMFLTPAFRLSPSLLPWNFSRG) constitute a mitochondrion transit peptide.

Belongs to the bacterial ribosomal protein bL36 family. In terms of assembly, component of the mitochondrial large ribosomal subunit (mt-LSU). Mature yeast 74S mitochondrial ribosomes consist of a small (37S) and a large (54S) subunit. The 37S small subunit contains a 15S ribosomal RNA (15S mt-rRNA) and at least 32 different proteins. The 54S large subunit contains a 21S rRNA (21S mt-rRNA) and at least 45 different proteins. bL36m has a zinc binding site.

The protein resides in the mitochondrion. Functionally, component of the mitochondrial ribosome (mitoribosome), a dedicated translation machinery responsible for the synthesis of mitochondrial genome-encoded proteins, including at least some of the essential transmembrane subunits of the mitochondrial respiratory chain. The mitoribosomes are attached to the mitochondrial inner membrane and translation products are cotranslationally integrated into the membrane. bL36m may be involved in a process influencing telomere capping. The sequence is that of Large ribosomal subunit protein bL36m (rtc6) from Schizosaccharomyces pombe (strain 972 / ATCC 24843) (Fission yeast).